Reading from the N-terminus, the 310-residue chain is Ribosomal RNA small subunit methyltransferase H (310 aa).

S-adenosyl-L-methionine contacts are provided by residues 35-37 (GGH), aspartate 52, phenylalanine 79, aspartate 100, and glutamine 107.

This sequence belongs to the methyltransferase superfamily. RsmH family.

It is found in the cytoplasm. The enzyme catalyses cytidine(1402) in 16S rRNA + S-adenosyl-L-methionine = N(4)-methylcytidine(1402) in 16S rRNA + S-adenosyl-L-homocysteine + H(+). Specifically methylates the N4 position of cytidine in position 1402 (C1402) of 16S rRNA. The polypeptide is Ribosomal RNA small subunit methyltransferase H (Anaeromyxobacter sp. (strain K)).